Reading from the N-terminus, the 459-residue chain is MSQSSASSIFTVSRLNQTVRELLEREMGQIWLTAEISNFSQPASGHWYFTLKDDRAQVRCAMFRNSNRRTTFRPQNGQQVLVRASITLYEPRGDYQLIAESMQPAGDGLLQQQFEQLKQQLAAEGLFDQSHKQPLPSPAKQVGVITSASGAALHDVLHVLQRRDPSLPVIIYPTSVQGVDAPLQIVRAIQLANLRAECDVLIVGRGGGSLEDLWSFNDERVARAIFNSHIPIVSAVGHETDVTIADFVADLRAPTPSAAAELVSRNQIELVRQIQGQQQRMEMAMDYYLAQRNQQFTRLEHRLQQQHPHLRLARQQTLLLKLQRRLEESAQTQIRLLSKRTERLQQRLQQVQPQGQIHRYNQRVQQQEYRLRQAVERQLNGYRQRFGIACSQLEAVSPLATLARGYSVTQTPAGALLKTTKQVQAGDKLTTRLQDGWVESEITQVTVAKKSRQKKVVTQ.

Belongs to the XseA family. In terms of assembly, heterooligomer composed of large and small subunits.

It is found in the cytoplasm. The catalysed reaction is Exonucleolytic cleavage in either 5'- to 3'- or 3'- to 5'-direction to yield nucleoside 5'-phosphates.. In terms of biological role, bidirectionally degrades single-stranded DNA into large acid-insoluble oligonucleotides, which are then degraded further into small acid-soluble oligonucleotides. This chain is Exodeoxyribonuclease 7 large subunit, found in Yersinia pseudotuberculosis serotype IB (strain PB1/+).